Consider the following 90-residue polypeptide: DNA-directed RNA polymerase subunit omega (90 aa).

This sequence belongs to the RNA polymerase subunit omega family. In terms of assembly, the RNAP catalytic core consists of 2 alpha, 1 beta, 1 beta' and 1 omega subunit. When a sigma factor is associated with the core the holoenzyme is formed, which can initiate transcription.

It catalyses the reaction RNA(n) + a ribonucleoside 5'-triphosphate = RNA(n+1) + diphosphate. In terms of biological role, promotes RNA polymerase assembly. Latches the N- and C-terminal regions of the beta' subunit thereby facilitating its interaction with the beta and alpha subunits. This Streptomyces griseus subsp. griseus (strain JCM 4626 / CBS 651.72 / NBRC 13350 / KCC S-0626 / ISP 5235) protein is DNA-directed RNA polymerase subunit omega.